The following is a 409-amino-acid chain: F-box/kelch-repeat protein At2g44130 (409 aa).

Positions 17–63 constitute an F-box domain; that stretch reads HELIPGLPSELALECLVRVPFQFQSAMRSVCRSWRSLLSDSSFIQER. Kelch repeat units follow at residues 98–148, 151–199, 201–248, and 251–300; these read KKSE…VLQD, KILL…SVSP, KVYV…AVGM, and RFCV…RTAG.

The protein is F-box/kelch-repeat protein At2g44130 of Arabidopsis thaliana (Mouse-ear cress).